The primary structure comprises 911 residues: Protein dead ringer (911 aa).

Disordered stretches follow at residues Met1–Ser44, Ser67–His87, and His172–Gly274. A compositionally biased stretch (basic and acidic residues) spans Ile19 to Arg34. Ser30 carries the phosphoserine modification. Thr35 is subject to Phosphothreonine. Ser44 carries the phosphoserine modification. The segment covering Thr174 to Thr201 has biased composition (low complexity). Gly residues predominate over residues Asn202–Gly231. A compositionally biased stretch (low complexity) spans Ala252–Asn273. In terms of domain architecture, ARID spans Asp293–Lys385. Disordered regions lie at residues Gly501–Gly633, Pro662–Asn775, and Gln826–Met877. The segment covering His512–Ser550 has biased composition (low complexity). Over residues His570–Asn600 the composition is skewed to polar residues. Phosphoserine is present on residues Ser592 and Ser594. Basic and acidic residues predominate over residues Ile601–Val621. Phosphoserine is present on Ser720. Positions Thr731–Ser825 constitute an REKLES domain. Residues Gly737 to Gly751 show a composition bias toward basic residues. Residues Thr841–Glu853 are compositionally biased toward acidic residues. Basic and acidic residues predominate over residues Pro854–Asn870.

Present in the pharyngeal muscles, hindgut epithelium, amnioserosa, ring gland, midgut-hindgut junction, posterior region of each brain lobe, longitudinal glial cells of the CNS and the salivary gland duct of germ-band retracted embryos.

The protein resides in the nucleus. Its function is as follows. Transcription factor which is a downstream target of gcm and repo. Directly or indirectly activates the transcription of locos and pros, which are essential for the development of some glial cells. Plays an essential role in defining the cell shape and migration characteristics of longitudinal glia that enable them to establish a normal axon scaffold. The sequence is that of Protein dead ringer (retn) from Drosophila melanogaster (Fruit fly).